A 347-amino-acid polypeptide reads, in one-letter code: SUMO-activating enzyme subunit 1 (347 aa).

It belongs to the ubiquitin-activating E1 family. As to quaternary structure, heterodimer of sae1 and uba2/sae2. The heterodimer corresponds to the two domains that are encoded on a single polypeptide chain in ubiquitin-activating enzyme E1. Interacts with ube2i.

It is found in the nucleus. It functions in the pathway protein modification; protein sumoylation. Its function is as follows. The heterodimer acts as an E1 ligase for sumo1, sumo2, and sumo3. It mediates ATP-dependent activation of sumo proteins followed by formation of a thioester bond between a sumo protein and a conserved active site cysteine residue on uba2/sae2. This chain is SUMO-activating enzyme subunit 1 (sae1), found in Xenopus tropicalis (Western clawed frog).